The primary structure comprises 188 residues: Adenine phosphoribosyltransferase (188 aa).

134 to 138 contributes to the AMP binding site; it reads ATGGS.

Belongs to the purine/pyrimidine phosphoribosyltransferase family. Homodimer. Mg(2+) is required as a cofactor.

The protein resides in the cytoplasm. The protein localises to the nucleus. It catalyses the reaction AMP + diphosphate = 5-phospho-alpha-D-ribose 1-diphosphate + adenine. The protein operates within purine metabolism; AMP biosynthesis via salvage pathway; AMP from adenine: step 1/1. Catalyzes a salvage reaction resulting in the formation of AMP, that is energically less costly than de novo synthesis. The polypeptide is Adenine phosphoribosyltransferase (APT1) (Candida albicans (strain SC5314 / ATCC MYA-2876) (Yeast)).